Consider the following 145-residue polypeptide: Heat shock protein hsp-16.2 (145 aa).

Residues 32–137 (VCRISPSESS…QGRSIPIQQA (106 aa)) enclose the sHSP domain.

This sequence belongs to the small heat shock protein (HSP20) family.

The protein is Heat shock protein hsp-16.2 of Caenorhabditis elegans.